The following is a 157-amino-acid chain: 3-dehydroquinate dehydratase (157 aa).

Catalysis depends on Tyr24, which acts as the Proton acceptor. Substrate is bound by residues Asn75, His81, and Asp88. The Proton donor role is filled by His101. Residues 102–103 and Arg112 contribute to the substrate site; that span reads LS.

The protein belongs to the type-II 3-dehydroquinase family. Homododecamer.

It catalyses the reaction 3-dehydroquinate = 3-dehydroshikimate + H2O. It participates in metabolic intermediate biosynthesis; chorismate biosynthesis; chorismate from D-erythrose 4-phosphate and phosphoenolpyruvate: step 3/7. Functionally, catalyzes a trans-dehydration via an enolate intermediate. The protein is 3-dehydroquinate dehydratase of Brucella canis (strain ATCC 23365 / NCTC 10854 / RM-666).